A 136-amino-acid chain; its full sequence is Large ribosomal subunit protein uL16c (136 aa).

The protein belongs to the universal ribosomal protein uL16 family. As to quaternary structure, part of the 50S ribosomal subunit.

It localises to the plastid. The protein localises to the chloroplast. The protein is Large ribosomal subunit protein uL16c of Guizotia abyssinica (Niger).